A 326-amino-acid polypeptide reads, in one-letter code: ATP synthase gamma chain (326 aa).

It belongs to the ATPase gamma chain family. As to quaternary structure, F-type ATPases have 2 components, CF(1) - the catalytic core - and CF(0) - the membrane proton channel. CF(1) has five subunits: alpha(3), beta(3), gamma(1), delta(1), epsilon(1). CF(0) has three main subunits: a, b and c.

It localises to the cell membrane. Produces ATP from ADP in the presence of a proton gradient across the membrane. The gamma chain is believed to be important in regulating ATPase activity and the flow of protons through the CF(0) complex. This is ATP synthase gamma chain from Corynebacterium jeikeium (strain K411).